We begin with the raw amino-acid sequence, 229 residues long: Chloride conductance regulatory protein ICln (229 aa).

The protein belongs to the pICln (TC 1.A.47) family. In terms of assembly, homooligomer.

The protein localises to the cytoplasm. It is found in the nucleus. In terms of biological role, may participate in cellular volume control by activation of a swelling-induced chloride conductance pathway. This chain is Chloride conductance regulatory protein ICln, found in Arabidopsis thaliana (Mouse-ear cress).